Consider the following 363-residue polypeptide: GTPase Obg (363 aa).

The Obg domain maps to 1–159; sequence MKFLDEAKVY…KTIWLRLKLI (159 aa). In terms of domain architecture, OBG-type G spans 160 to 327; sequence ADAGLVGLPN…VLRALRDIIV (168 aa). GTP contacts are provided by residues 166–173, 191–195, 212–215, 279–282, and 308–310; these read GLPNAGKS, FTTLH, DIPG, SQID, and SAV. 2 residues coordinate Mg(2+): serine 173 and threonine 193. Positions 332 to 363 are disordered; sequence EEKPAKAPKLRHRDMIVSEENNQGEDGADDQP. Over residues 353–363 the composition is skewed to acidic residues; the sequence is NQGEDGADDQP.

This sequence belongs to the TRAFAC class OBG-HflX-like GTPase superfamily. OBG GTPase family. Monomer. Requires Mg(2+) as cofactor.

The protein localises to the cytoplasm. In terms of biological role, an essential GTPase which binds GTP, GDP and possibly (p)ppGpp with moderate affinity, with high nucleotide exchange rates and a fairly low GTP hydrolysis rate. Plays a role in control of the cell cycle, stress response, ribosome biogenesis and in those bacteria that undergo differentiation, in morphogenesis control. The protein is GTPase Obg of Rhizobium etli (strain ATCC 51251 / DSM 11541 / JCM 21823 / NBRC 15573 / CFN 42).